The chain runs to 286 residues: Polyamine aminopropyltransferase (286 aa).

Positions 5–238 constitute a PABS domain; that stretch reads TMWHETLHDQ…GIMTFAWATN (234 aa). Gln-33 contacts S-methyl-5'-thioadenosine. Positions 64 and 88 each coordinate spermidine. S-methyl-5'-thioadenosine contacts are provided by residues Glu-108 and 140–141; that span reads DG. Asp-158 functions as the Proton acceptor in the catalytic mechanism. 158–161 is a binding site for spermidine; the sequence is DCTD. Pro-165 contributes to the S-methyl-5'-thioadenosine binding site.

This sequence belongs to the spermidine/spermine synthase family. As to quaternary structure, homodimer or homotetramer.

The protein localises to the cytoplasm. It carries out the reaction S-adenosyl 3-(methylsulfanyl)propylamine + putrescine = S-methyl-5'-thioadenosine + spermidine + H(+). It participates in amine and polyamine biosynthesis; spermidine biosynthesis; spermidine from putrescine: step 1/1. Its function is as follows. Catalyzes the irreversible transfer of a propylamine group from the amino donor S-adenosylmethioninamine (decarboxy-AdoMet) to putrescine (1,4-diaminobutane) to yield spermidine. This chain is Polyamine aminopropyltransferase, found in Salmonella paratyphi B (strain ATCC BAA-1250 / SPB7).